Here is a 586-residue protein sequence, read N- to C-terminus: NudC domain-containing protein 1 (586 aa).

Residues 275 to 364 (KREPLYNWQQ…EPGCTWAELV (90 aa)) enclose the CS domain.

It localises to the cytoplasm. Its subcellular location is the nucleus. This is NudC domain-containing protein 1 from Xenopus laevis (African clawed frog).